Here is a 573-residue protein sequence, read N- to C-terminus: Urease subunit alpha 2 (573 aa).

The 439-residue stretch at 135–573 (GGMDTHVHYI…ISLNQLYFFS (439 aa)) folds into the Urease domain. Ni(2+)-binding residues include His140, His142, and Lys223. Lys223 carries the N6-carboxylysine modification. Residue His225 coordinates substrate. Residues His252 and His278 each contribute to the Ni(2+) site. His326 acts as the Proton donor in catalysis. Residue Asp366 participates in Ni(2+) binding.

This sequence belongs to the metallo-dependent hydrolases superfamily. Urease alpha subunit family. In terms of assembly, heterotrimer of UreA (gamma), UreB (beta) and UreC (alpha) subunits. Three heterotrimers associate to form the active enzyme. It depends on Ni cation as a cofactor. Carboxylation allows a single lysine to coordinate two nickel ions.

The protein resides in the cytoplasm. The enzyme catalyses urea + 2 H2O + H(+) = hydrogencarbonate + 2 NH4(+). It participates in nitrogen metabolism; urea degradation; CO(2) and NH(3) from urea (urease route): step 1/1. Its function is as follows. Disrupting the ure2 operon has no effect on urease activity or pathogen survival in BALB/c mice when administered orally. This is Urease subunit alpha 2 from Brucella abortus (strain 2308).